The following is a 226-amino-acid chain: UPF0758 protein PputW619_0186 (226 aa).

Residues 102–224 (ALESPSAVRR…PLSMVEQGWI (123 aa)) enclose the MPN domain. Zn(2+) contacts are provided by His-173, His-175, and Asp-186. The JAMM motif signature appears at 173–186 (HNHPSGNSEPSQDD).

This sequence belongs to the UPF0758 family.

The polypeptide is UPF0758 protein PputW619_0186 (Pseudomonas putida (strain W619)).